The sequence spans 258 residues: Phosphoribosylaminoimidazole-succinocarboxamide synthase (258 aa).

The protein belongs to the SAICAR synthetase family.

The enzyme catalyses 5-amino-1-(5-phospho-D-ribosyl)imidazole-4-carboxylate + L-aspartate + ATP = (2S)-2-[5-amino-1-(5-phospho-beta-D-ribosyl)imidazole-4-carboxamido]succinate + ADP + phosphate + 2 H(+). It functions in the pathway purine metabolism; IMP biosynthesis via de novo pathway; 5-amino-1-(5-phospho-D-ribosyl)imidazole-4-carboxamide from 5-amino-1-(5-phospho-D-ribosyl)imidazole-4-carboxylate: step 1/2. The protein is Phosphoribosylaminoimidazole-succinocarboxamide synthase of Maricaulis maris (strain MCS10) (Caulobacter maris).